The following is a 132-amino-acid chain: D-ribose pyranase (132 aa).

His-20 (proton donor) is an active-site residue. Substrate-binding positions include Asp-28, His-99, and 121–123; that span reads YSN.

This sequence belongs to the RbsD / FucU family. RbsD subfamily. In terms of assembly, homodecamer.

Its subcellular location is the cytoplasm. It catalyses the reaction beta-D-ribopyranose = beta-D-ribofuranose. The protein operates within carbohydrate metabolism; D-ribose degradation; D-ribose 5-phosphate from beta-D-ribopyranose: step 1/2. Its function is as follows. Catalyzes the interconversion of beta-pyran and beta-furan forms of D-ribose. The chain is D-ribose pyranase from Lactococcus lactis subsp. cremoris (strain MG1363).